The following is a 243-amino-acid chain: Large ribosomal subunit protein uL2 (243 aa).

Disordered stretches follow at residues 1-23 (MGKR…PSHR) and 204-243 (PFGG…GGRR). Positions 228–243 (KVGHIAARKTGRGGRR) are enriched in basic residues.

The protein belongs to the universal ribosomal protein uL2 family. As to quaternary structure, part of the 50S ribosomal subunit. Forms a bridge to the 30S subunit in the 70S ribosome.

One of the primary rRNA binding proteins. Required for association of the 30S and 50S subunits to form the 70S ribosome, for tRNA binding and peptide bond formation. It has been suggested to have peptidyltransferase activity; this is somewhat controversial. Makes several contacts with the 16S rRNA in the 70S ribosome. This chain is Large ribosomal subunit protein uL2, found in Methanopyrus kandleri (strain AV19 / DSM 6324 / JCM 9639 / NBRC 100938).